Consider the following 360-residue polypeptide: Peptide chain release factor 1 (360 aa).

Residue Q235 is modified to N5-methylglutamine. Residues 281 to 307 (ERQRADSERSADRRNQVGSGDRSERIR) are compositionally biased toward basic and acidic residues. The interval 281-310 (ERQRADSERSADRRNQVGSGDRSERIRTYN) is disordered.

This sequence belongs to the prokaryotic/mitochondrial release factor family. Post-translationally, methylated by PrmC. Methylation increases the termination efficiency of RF1.

The protein localises to the cytoplasm. In terms of biological role, peptide chain release factor 1 directs the termination of translation in response to the peptide chain termination codons UAG and UAA. The polypeptide is Peptide chain release factor 1 (Sinorhizobium medicae (strain WSM419) (Ensifer medicae)).